A 173-amino-acid polypeptide reads, in one-letter code: Regulatory protein RecX (173 aa).

It belongs to the RecX family.

It is found in the cytoplasm. Modulates RecA activity. This is Regulatory protein RecX from Mycobacterium marinum (strain ATCC BAA-535 / M).